Reading from the N-terminus, the 459-residue chain is Flavin-containing monooxygenase FMO GS-OX1 (459 aa).

Residue 17-22 (GAGAAG) participates in FAD binding. Residue 211–216 (GNYASG) participates in NADP(+) binding.

It belongs to the FMO family. FAD is required as a cofactor. In terms of tissue distribution, mainly expressed in leaves. Low levels in flowers and seeds.

It catalyses the reaction a (Z)-omega-(methylsulfanyl)-N-sulfo-alkylhydroximate S-glucoside + NADPH + O2 + H(+) = a (Z)-omega-(methylsulfinyl)-alkyl-glucosinolate + NADP(+) + H2O. Catalyzes the conversion of methylthioalkyl glucosinolates into methylsulfinylalkyl glucosinolates. Able to S-oxygenate both desulfo- and intact 4-methylthiobutyl glucosinolates, but no activity with methionine, dihomomethionine or 5-methylthiopentaldoxime. This chain is Flavin-containing monooxygenase FMO GS-OX1 (FMOGS-OX1), found in Arabidopsis thaliana (Mouse-ear cress).